Here is a 541-residue protein sequence, read N- to C-terminus: FAD-linked oxidoreductase pynB (541 aa).

The N-terminal stretch at 1–20 (MRLSARGFVWSALLACTASA) is a signal peptide. N-linked (GlcNAc...) asparagine glycosylation is found at Asn-30, Asn-57, Asn-117, Asn-131, Asn-158, Asn-253, Asn-306, Asn-343, Asn-430, and Asn-461. One can recognise an FAD-binding PCMH-type domain in the interval 71 to 242 (FNEFPALIAY…VDFDLQLMQF (172 aa)).

Belongs to the oxygen-dependent FAD-linked oxidoreductase family. Requires FAD as cofactor.

The protein operates within secondary metabolite biosynthesis. FAD-linked oxidoreductase; part of the gene cluster that mediates the biosynthesis of pyranonigrins, a family of antioxidative compounds. The first step of pyranonigrins biosynthesis is performed by the hybrid PKS-NRPS synthetase that condenses 6 malonyl-CoA units to an acetyl starter unit, to form a 1,3,5-trioxotetradecane-6,8-dienyl-ACP. The enoyl reductase (ER) domain of pynA is likely to be functional during the first two rounds of polyketide chain extension, to generate the saturated C-C bonds of the alkyl side chain. PynA subsequently forms the amide bond between the acyl chain and L-serine. Although pynA has a terminal reductase domain, it appears to require the thioesterase pynI for the release of the straight-chain intermediate from pynA via the formation of a tetramic acid pyranonigrin J. The methyltransferase pynC then coverts pyranonigrin J to pyranonigrin I via N-methylation. The FAD-dependent monooxygenase pynG catalyzes an epoxidation-mediated cyclization to form the dihydro-gamma-pyrone moiety, followed by pynD-catalyzed oxidation of the alcohol to the ketone and enolization to yield the characteristic tetramic acid-fused gamma-pyrone core of pyranonigrin H. Pyranonigrin H is substrate of pynH for dehydration-mediated exo-methylene formation from the serine side chain to produce pyranonigrin E, before the oxidase pynE reduces the exo-methylene of pyranonigrin E into a pendant methyl to form pyranonigrin G. The FAD-linked oxidoreductase pynB performs the reverse reaction and converts pyranonigrin G back to pyranonigrin E. The polypeptide is FAD-linked oxidoreductase pynB (Aspergillus niger (strain ATCC MYA-4892 / CBS 513.88 / FGSC A1513)).